We begin with the raw amino-acid sequence, 41 residues long: ORF3c protein (41 aa).

Its function is as follows. May play a role in host modulation. The polypeptide is ORF3c protein (Severe acute respiratory syndrome coronavirus 2 (2019-nCoV)).